Consider the following 162-residue polypeptide: MGLETEKADVQLFLDDDSYSHHGDVDYADPEKFADSGHDRDPHRLNSHLKVGFEDVIAEPMTTHSCDKVWICSHALFEISKYVMYKFLTVFLAIPLAFAAGILFATLSCLHIWIIMPFVKTCLMVLPSVQTIWKSVTDVIIAPLCTSVGRSLSSISLQLSHD.

At 1 to 86 (MGLETEKADV…FEISKYVMYK (86 aa)) the chain is on the cytoplasmic side. Residue Tyr19 is modified to Phosphotyrosine; by SRC. At Ser20 the chain carries Phosphoserine. At Tyr27 the chain carries Phosphotyrosine; by SRC. Ser36 is subject to Phosphoserine. Positions 87 to 107 (FLTVFLAIPLAFAAGILFATL) form an intramembrane region, helical. The Cytoplasmic segment spans residues 108–162 (SCLHIWIIMPFVKTCLMVLPSVQTIWKSVTDVIIAPLCTSVGRSLSSISLQLSHD).

It belongs to the caveolin family. Monomer or homodimer. Interacts with CAV1; the interaction forms a stable heterooligomeric complex that is required for targeting to lipid rafts and for caveolae formation. Tyrosine phosphorylated forms do not form heterooligomers with the Tyr-19-phosphorylated form existing as a monomer or dimer, and the Tyr-27-form as a monomer only. Interacts (tyrosine phosphorylated form) with the SH2 domain-containing proteins, RASA1, NCK1 and SRC. Interacts (tyrosine phosphorylated form) with INSR, the interaction (Tyr-27-phosphorylated form) is increased on insulin stimulation. Interacts (Tyr-19 phosphorylated form) with MAPK1 (phosphorylated form); the interaction, promoted by insulin, leads to nuclear location and MAPK1 activation. Interacts with STAT3; the interaction is increased on insulin-induced tyrosine phosphorylation leading to STAT activation. Phosphorylated on serine and tyrosine residues. Phosphorylation on Ser-36 appears to modulate mitosis in endothelial cells. Phosphorylation on both Tyr-19 and Tyr-27 is required for insulin-induced 'Ser-727' phosphorylation of STAT3 and its activation. Phosphorylation on Tyr-19 is required for insulin-induced phosphorylation of MAPK1 and DNA binding of STAT3. Tyrosine phosphorylation is induced by both EGF and insulin.

It is found in the nucleus. The protein localises to the cytoplasm. Its subcellular location is the golgi apparatus membrane. It localises to the cell membrane. The protein resides in the membrane. It is found in the caveola. Its function is as follows. May act as a scaffolding protein within caveolar membranes. Interacts directly with G-protein alpha subunits and can functionally regulate their activity. Acts as an accessory protein in conjunction with CAV1 in targeting to lipid rafts and driving caveolae formation. The Ser-36 phosphorylated form has a role in modulating mitosis in endothelial cells. Positive regulator of cellular mitogenesis of the MAPK signaling pathway. Required for the insulin-stimulated nuclear translocation and activation of MAPK1 and STAT3, and the subsequent regulation of cell cycle progression. The chain is Caveolin-2 (CAV2) from Eulemur macaco macaco (Black lemur).